Reading from the N-terminus, the 413-residue chain is Prophage integrase IntA (413 aa).

One can recognise a Core-binding (CB) domain in the interval 105–186 (NTFLLVAERW…RINEVMIYAQ (82 aa)). The Tyr recombinase domain maps to 209 to 386 (KNMPSIRPDQ…DYLEQRRPMM (178 aa)). Residues R248, K275, H337, R340, and H363 contribute to the active site. Y373 serves as the catalytic O-(3'-phospho-DNA)-tyrosine intermediate.

This sequence belongs to the 'phage' integrase family.

In terms of biological role, integrase is necessary for integration of the phage into the host genome by site-specific recombination. In conjunction with excisionase, integrase is also necessary for excision of the prophage from the host genome. Part of the cryptic P4-like prophage CP4-57, it excises the prophage when overexpressed, which also requires integration host factor (encoded by ihfA and ihfB). Overexpression of AlpA leads to excision of the CP4-57 prophage, which inactivates ssrA (the gene upstream of the prophage) that encodes tmRNA which is required to rescue stalled ribosomes in a process known as trans-translation. This is Prophage integrase IntA (intA) from Escherichia coli (strain K12).